Reading from the N-terminus, the 60-residue chain is Large ribosomal subunit protein bL32 (60 aa).

The segment at 1 to 44 (MAVQQNKKSRSARDMRRSHDALEASTLSVEKTTGEVHLRHHVSP) is disordered. Residues 11–22 (SARDMRRSHDAL) are compositionally biased toward basic and acidic residues.

Belongs to the bacterial ribosomal protein bL32 family.

This Pseudomonas fluorescens (strain SBW25) protein is Large ribosomal subunit protein bL32.